The following is a 71-amino-acid chain: Beta-defensin 10 (71 aa).

Positions 1-23 (MKTLCSLLLIGCLLFSYDTPVVG) are cleaved as a signal peptide. Disulfide bonds link Cys37-Cys66, Cys44-Cys59, and Cys49-Cys67.

It belongs to the beta-defensin family.

Its subcellular location is the secreted. In terms of biological role, has antibacterial activity. This is Beta-defensin 10 (Defb10) from Rattus norvegicus (Rat).